Reading from the N-terminus, the 221-residue chain is Vacuolar protein sorting-associated protein 20 (221 aa).

The N-myristoyl glycine moiety is linked to residue Gly2. Residues 72-178 adopt a coiled-coil conformation; sequence QEHLLQQASD…LNPEKMNNAK (107 aa). Residues 170-221 form a disordered region; that stretch reads NPEKMNNAKVANMPSTEGLPSLPQGEQTEQKEREEFATEERSDTKEPLALLS. Residues 197–215 show a composition bias toward basic and acidic residues; that stretch reads TEQKEREEFATEERSDTKE.

This sequence belongs to the SNF7 family. In terms of assembly, core component of the ESCRT-III complex (endosomal sorting required for transport complex III). ESCRT-III appears to be sequentially assembled as a flat lattice on the endosome membrane and forms a transient 450 kDa complex that contains DID4, oligomerized SNF7, VPS20 and VPS24. SNF7 oligomerization into a membrane-associated filament is nucleated by association of SNF7 with VPS20; the process is terminated through association of VPS24, possibly by capping the SNF7 filament. VPS24 subsequently associates with DID4/VPS2. Interacts with the VPS4. Interacts with VPS25; the interaction mediates the association with the ESCRT-II complex.

The protein localises to the endosome membrane. It localises to the vacuole membrane. Its function is as follows. Class E VPS protein implicated in concentration and sorting of cargo proteins of the multivesicular body (MVB) for incorporation into intralumenal vesicles. The lumenal sequestrated membrane proteins will be targeted into the vacuole after fusion of the endosome with the vacuole. Acts a component of the ESCRT-III complex, which appears to be critical for late steps in MVB sorting, such as membrane invagination and final cargo sorting and recruitment of late-acting components of the sorting machinery. The MVB pathway requires the sequential function of ESCRT-O, -I,-II and -III complex assemblies. Required for the oligomerization of SNF7 into a membrane-associated filament. The VPS20-SNF7 subcomplex is responsible for the membrane association of the ESCRT-III complex. Also required for the RIM101 repressor proteolytic activation. The chain is Vacuolar protein sorting-associated protein 20 (VPS20) from Saccharomyces cerevisiae (strain ATCC 204508 / S288c) (Baker's yeast).